The chain runs to 336 residues: Holliday junction branch migration complex subunit RuvB (336 aa).

The large ATPase domain (RuvB-L) stretch occupies residues 4-184 (SDRLISSQSI…FGIVQRLEYY (181 aa)). Residues I23, R24, G65, K68, T69, T70, 131–133 (EDY), R174, Y184, and R221 each bind ATP. T69 lines the Mg(2+) pocket. The interval 185–255 (SVDSLTKIVA…MAQQALEMLE (71 aa)) is small ATPAse domain (RuvB-S). Positions 258–336 (QHGFDLMDRK…HFGFSAIEQE (79 aa)) are head domain (RuvB-H). The DNA site is built by R313 and R318.

This sequence belongs to the RuvB family. Homohexamer. Forms an RuvA(8)-RuvB(12)-Holliday junction (HJ) complex. HJ DNA is sandwiched between 2 RuvA tetramers; dsDNA enters through RuvA and exits via RuvB. An RuvB hexamer assembles on each DNA strand where it exits the tetramer. Each RuvB hexamer is contacted by two RuvA subunits (via domain III) on 2 adjacent RuvB subunits; this complex drives branch migration. In the full resolvosome a probable DNA-RuvA(4)-RuvB(12)-RuvC(2) complex forms which resolves the HJ.

The protein localises to the cytoplasm. It catalyses the reaction ATP + H2O = ADP + phosphate + H(+). The RuvA-RuvB-RuvC complex processes Holliday junction (HJ) DNA during genetic recombination and DNA repair, while the RuvA-RuvB complex plays an important role in the rescue of blocked DNA replication forks via replication fork reversal (RFR). RuvA specifically binds to HJ cruciform DNA, conferring on it an open structure. The RuvB hexamer acts as an ATP-dependent pump, pulling dsDNA into and through the RuvAB complex. RuvB forms 2 homohexamers on either side of HJ DNA bound by 1 or 2 RuvA tetramers; 4 subunits per hexamer contact DNA at a time. Coordinated motions by a converter formed by DNA-disengaged RuvB subunits stimulates ATP hydrolysis and nucleotide exchange. Immobilization of the converter enables RuvB to convert the ATP-contained energy into a lever motion, pulling 2 nucleotides of DNA out of the RuvA tetramer per ATP hydrolyzed, thus driving DNA branch migration. The RuvB motors rotate together with the DNA substrate, which together with the progressing nucleotide cycle form the mechanistic basis for DNA recombination by continuous HJ branch migration. Branch migration allows RuvC to scan DNA until it finds its consensus sequence, where it cleaves and resolves cruciform DNA. This is Holliday junction branch migration complex subunit RuvB from Legionella pneumophila (strain Paris).